The following is a 258-amino-acid chain: Myogenic factor 5 (258 aa).

Positions 21 to 50 (LSSPEGEFPEDFEPRELPPFGAPAPTEPAC) are disordered. The bHLH domain occupies 85–136 (DRRKAATMRERRRLKKVNQAFETLKRCTTANPNQRLPKVEILRNAIRYIESL). Residues 220-258 (AEEPGLPLRHAGSLSPGASIDSGPGTPGSPPPRRTYQAL) are disordered.

In terms of assembly, efficient DNA binding requires dimerization with another bHLH protein.

The protein localises to the nucleus. In terms of biological role, acts as a transcriptional activator that promotes transcription of muscle-specific target genes and plays a role in muscle differentiation. Induces fibroblasts to differentiate into myoblasts. Probable sequence specific DNA-binding protein. This is Myogenic factor 5 (MYF5) from Gallus gallus (Chicken).